The primary structure comprises 593 residues: Probable serine/threonine-protein kinase samkB (593 aa).

Positions 29–93 constitute an SAM domain; it reads WNNEAVCEWL…SIFKKLKNNN (65 aa). The segment at 108–157 is disordered; the sequence is ESNSINNSNNNNNNNNNNNNNNNNNNNNNNNNNNNNNNNNNNNNNNKIDT. Positions 113 to 153 are enriched in low complexity; the sequence is NNSNNNNNNNNNNNNNNNNNNNNNNNNNNNNNNNNNNNNNN. Residues 186–438 enclose the Protein kinase domain; sequence YKLIEEIGRG…SKQLLEAQWF (253 aa). Residues 192-200 and Lys-216 contribute to the ATP site; that span reads IGRGAFSIV. The Proton acceptor role is filled by Asp-313.

It belongs to the protein kinase superfamily. Ser/Thr protein kinase family.

The catalysed reaction is L-seryl-[protein] + ATP = O-phospho-L-seryl-[protein] + ADP + H(+). The enzyme catalyses L-threonyl-[protein] + ATP = O-phospho-L-threonyl-[protein] + ADP + H(+). The polypeptide is Probable serine/threonine-protein kinase samkB (samkB) (Dictyostelium discoideum (Social amoeba)).